The primary structure comprises 117 residues: Large ribosomal subunit protein bL20 (117 aa).

It belongs to the bacterial ribosomal protein bL20 family.

In terms of biological role, binds directly to 23S ribosomal RNA and is necessary for the in vitro assembly process of the 50S ribosomal subunit. It is not involved in the protein synthesizing functions of that subunit. In Solidesulfovibrio magneticus (strain ATCC 700980 / DSM 13731 / RS-1) (Desulfovibrio magneticus), this protein is Large ribosomal subunit protein bL20.